The primary structure comprises 396 residues: Ribosomal RNA large subunit methyltransferase I (396 aa).

The region spanning 2 to 79 is the PUA domain; that stretch reads AIRIKLKPGR…REEEIDRAFF (78 aa).

This sequence belongs to the methyltransferase superfamily. RlmI family.

The protein localises to the cytoplasm. It catalyses the reaction cytidine(1962) in 23S rRNA + S-adenosyl-L-methionine = 5-methylcytidine(1962) in 23S rRNA + S-adenosyl-L-homocysteine + H(+). Its function is as follows. Specifically methylates the cytosine at position 1962 (m5C1962) of 23S rRNA. The chain is Ribosomal RNA large subunit methyltransferase I from Shewanella putrefaciens (strain CN-32 / ATCC BAA-453).